A 243-amino-acid polypeptide reads, in one-letter code: Venom nerve growth factor 1 (243 aa).

Positions 1–18 are cleaved as a signal peptide; sequence MSMLCYTLIIAFLIGIWA. Residues 19–125 constitute a propeptide that is removed on maturation; sequence APKSEDNVPL…TLNRNIRAKR (107 aa). Positions 47–66 are enriched in basic and acidic residues; sequence GLKTSRNTDQRHPAPKKAED. Residues 47 to 69 form a disordered region; it reads GLKTSRNTDQRHPAPKKAEDQEL. 3 cysteine pairs are disulfide-bonded: cysteine 139–cysteine 204, cysteine 182–cysteine 232, and cysteine 192–cysteine 234. The N-linked (GlcNAc...) asparagine glycan is linked to asparagine 148.

The protein belongs to the NGF-beta family. Homodimer; non-covalently linked. In terms of tissue distribution, expressed by the venom gland.

Its subcellular location is the secreted. Functionally, nerve growth factor is important for the development and maintenance of the sympathetic and sensory nervous systems. It stimulates division and differentiation of sympathetic and embryonic sensory neurons as well as basal forebrain cholinergic neurons in the brain. Its relevance in the snake venom is not clear. However, it has been shown to inhibit metalloproteinase-dependent proteolysis of platelet glycoprotein Ib alpha, suggesting a metalloproteinase inhibition to prevent metalloprotease autodigestion and/or protection against prey proteases. Binds a lipid between the two protein chains in the homodimer. The lipid-bound form promotes histamine relase from mouse mast cells, contrary to the lipid-free form. This chain is Venom nerve growth factor 1, found in Oxyuranus microlepidotus (Inland taipan).